Consider the following 314-residue polypeptide: Ribosomal RNA small subunit methyltransferase H (314 aa).

Residues 37 to 39, Asp-57, Phe-83, Asp-105, and Gln-112 contribute to the S-adenosyl-L-methionine site; that span reads GGH.

The protein belongs to the methyltransferase superfamily. RsmH family.

The protein resides in the cytoplasm. The enzyme catalyses cytidine(1402) in 16S rRNA + S-adenosyl-L-methionine = N(4)-methylcytidine(1402) in 16S rRNA + S-adenosyl-L-homocysteine + H(+). Specifically methylates the N4 position of cytidine in position 1402 (C1402) of 16S rRNA. In Thioalkalivibrio sulfidiphilus (strain HL-EbGR7), this protein is Ribosomal RNA small subunit methyltransferase H.